Consider the following 239-residue polypeptide: Lactate utilization protein A 1 (239 aa).

This sequence belongs to the LutA/YkgE family.

Its function is as follows. Is involved in L-lactate degradation and allows cells to grow with lactate as the sole carbon source. The polypeptide is Lactate utilization protein A 1 (Bacillus cereus (strain AH820)).